The chain runs to 445 residues: MSNHQYFGTDGIRGRVGDSPITPDFVLKLGWAAGKVLARHGSRKIIIGKDTRISGYMLESALEAGLAAAGLSAAFTGPMPTPAIAYLTRTFRAEAGIVISASHNPFYDNGIKFFSIDGTKLPDEVEEAIEAELAKPLTCVESVELGKASRIVDAAGRYIEFCKGTFPGNLSLKGLKIVVDCANGATYHIAPSVLRELGATVVTLGCQPDGMNINQECGATDVRLLQSRVLAEKADLGIAYDGDGDRVIMVDHLGQKVNGDQILYVIAREKLRQGQLSGGVVGTLMSNMGLELALKQLGVPFVRSRVGDRYVLEKMQEKGWRIGAENSGHVILLDKTTTGDGIIAGLQVLSAMVGNHMNLHDLCSGMRLLPQILVNVRFAGQHDPLASAAVKQASDEVEQQLAGRGRVLLRKSGTEPLIRVMVEGEDTEQVSRLAHHIADAVKAAG.

Serine 102 (phosphoserine intermediate) is an active-site residue. Mg(2+) contacts are provided by serine 102, aspartate 241, aspartate 243, and aspartate 245. At serine 102 the chain carries Phosphoserine.

Belongs to the phosphohexose mutase family. Mg(2+) serves as cofactor. Activated by phosphorylation.

The catalysed reaction is alpha-D-glucosamine 1-phosphate = D-glucosamine 6-phosphate. Its function is as follows. Catalyzes the conversion of glucosamine-6-phosphate to glucosamine-1-phosphate. This is Phosphoglucosamine mutase from Sodalis glossinidius (strain morsitans).